The sequence spans 670 residues: DNA ligase (670 aa).

NAD(+) contacts are provided by residues 31-35, 76-77, and glutamate 108; these read DAEYD and SL. The active-site N6-AMP-lysine intermediate is the lysine 110. 4 residues coordinate NAD(+): arginine 131, glutamate 166, lysine 271, and lysine 295. Zn(2+)-binding residues include cysteine 388, cysteine 391, cysteine 406, and cysteine 412. Residues 579–668 enclose the BRCT domain; sequence NIGGSLSGKK…NTPALKKETS (90 aa).

Belongs to the NAD-dependent DNA ligase family. LigA subfamily. Mg(2+) serves as cofactor. Mn(2+) is required as a cofactor.

It carries out the reaction NAD(+) + (deoxyribonucleotide)n-3'-hydroxyl + 5'-phospho-(deoxyribonucleotide)m = (deoxyribonucleotide)n+m + AMP + beta-nicotinamide D-nucleotide.. Its function is as follows. DNA ligase that catalyzes the formation of phosphodiester linkages between 5'-phosphoryl and 3'-hydroxyl groups in double-stranded DNA using NAD as a coenzyme and as the energy source for the reaction. It is essential for DNA replication and repair of damaged DNA. This Neorickettsia sennetsu (strain ATCC VR-367 / Miyayama) (Ehrlichia sennetsu) protein is DNA ligase.